The sequence spans 317 residues: Olfactory receptor 2F2 (317 aa).

Residues 1–25 are Extracellular-facing; it reads MEIDNQTWVREFILLGLSSDWCTQI. Residue Asn5 is glycosylated (N-linked (GlcNAc...) asparagine). The helical transmembrane segment at 26 to 49 threads the bilayer; that stretch reads SLFSLFLVTYLMTVLGNCLIVLLI. Residues 50–57 lie on the Cytoplasmic side of the membrane; that stretch reads RLDSRLHT. A helical transmembrane segment spans residues 58–79; it reads PMYFFLTNLSLVDVSYATSVVP. At 80–100 the chain is on the extracellular side; the sequence is QLLAHFLAEHKAIPFQSCAAQ. Cys97 and Cys189 form a disulfide bridge. The helical transmembrane segment at 101–120 threads the bilayer; sequence LFFSLALGGIEFVLLAVMAY. Residues 121-139 lie on the Cytoplasmic side of the membrane; it reads DRHVAVSDRLRYSAIMHGG. A helical transmembrane segment spans residues 140–158; the sequence is LCARLAITSWVSGSINSLV. The Extracellular portion of the chain corresponds to 159 to 195; it reads QTAITFQLPMCTNKFIDHISCELLAVVRLACVDTSSN. The chain crosses the membrane as a helical span at residues 196–219; sequence EAAIMVSSIVLLMTPFCLVLLSYI. Topologically, residues 220 to 236 are cytoplasmic; the sequence is RIISTILKIQSREGRKK. Residues 237-259 form a helical membrane-spanning segment; the sequence is AFHTCASHLTVVALCYGTTIFTY. The Extracellular portion of the chain corresponds to 260 to 272; the sequence is IQPHSGPSVLQEK. Residues 273–292 form a helical membrane-spanning segment; it reads LISVFYAIVMPLLNPVIYSL. Residues 293–317 are Cytoplasmic-facing; sequence RNKEVKGAWHKLLEKFSGLTSKLGT.

This sequence belongs to the G-protein coupled receptor 1 family.

The protein localises to the cell membrane. Odorant receptor. This Homo sapiens (Human) protein is Olfactory receptor 2F2 (OR2F2).